The sequence spans 62 residues: Photosystem II reaction center protein Z (62 aa).

2 helical membrane-spanning segments follow: residues 8–28 and 41–61; these read AVFA…VVFA and FSGT…NSLI.

The protein belongs to the PsbZ family. As to quaternary structure, PSII is composed of 1 copy each of membrane proteins PsbA, PsbB, PsbC, PsbD, PsbE, PsbF, PsbH, PsbI, PsbJ, PsbK, PsbL, PsbM, PsbT, PsbY, PsbZ, Psb30/Ycf12, at least 3 peripheral proteins of the oxygen-evolving complex and a large number of cofactors. It forms dimeric complexes.

It localises to the plastid. Its subcellular location is the chloroplast thylakoid membrane. Functionally, may control the interaction of photosystem II (PSII) cores with the light-harvesting antenna, regulates electron flow through the 2 photosystem reaction centers. PSII is a light-driven water plastoquinone oxidoreductase, using light energy to abstract electrons from H(2)O, generating a proton gradient subsequently used for ATP formation. The protein is Photosystem II reaction center protein Z of Pisum sativum (Garden pea).